We begin with the raw amino-acid sequence, 361 residues long: Ribosomal RNA large subunit methyltransferase M (361 aa).

Residues serine 187, cysteine 220 to glycine 223, aspartate 239, aspartate 259, and aspartate 276 contribute to the S-adenosyl-L-methionine site. Lysine 305 (proton acceptor) is an active-site residue.

This sequence belongs to the class I-like SAM-binding methyltransferase superfamily. RNA methyltransferase RlmE family. RlmM subfamily. As to quaternary structure, monomer.

The protein localises to the cytoplasm. The catalysed reaction is cytidine(2498) in 23S rRNA + S-adenosyl-L-methionine = 2'-O-methylcytidine(2498) in 23S rRNA + S-adenosyl-L-homocysteine + H(+). Functionally, catalyzes the 2'-O-methylation at nucleotide C2498 in 23S rRNA. The sequence is that of Ribosomal RNA large subunit methyltransferase M from Shewanella baltica (strain OS223).